The primary structure comprises 962 residues: Translation initiation factor IF-2 (962 aa).

The tract at residues Val-99–Glu-365 is disordered. Over residues Asp-117–Lys-141 the composition is skewed to basic and acidic residues. Positions Ala-145–Ala-155 are enriched in low complexity. The span at Lys-173–Lys-216 shows a compositional bias: basic and acidic residues. The segment covering Lys-219 to Glu-234 has biased composition (low complexity). The segment covering Gln-235–Met-269 has biased composition (basic and acidic residues). Residues Lys-270 to Ala-283 show a composition bias toward low complexity. Basic and acidic residues predominate over residues Gly-338 to Arg-354. Residues Pro-462–Thr-631 form the tr-type G domain. The G1 stretch occupies residues Gly-471–Thr-478. Gly-471–Thr-478 is a binding site for GTP. The segment at Gly-496 to His-500 is G2. Positions Asp-517–Gly-520 are G3. Residues Asp-517–His-521 and Asn-571–Asp-574 each bind GTP. The segment at Asn-571–Asp-574 is G4. The G5 stretch occupies residues Ser-607–Lys-609.

It belongs to the TRAFAC class translation factor GTPase superfamily. Classic translation factor GTPase family. IF-2 subfamily.

Its subcellular location is the cytoplasm. Functionally, one of the essential components for the initiation of protein synthesis. Protects formylmethionyl-tRNA from spontaneous hydrolysis and promotes its binding to the 30S ribosomal subunits. Also involved in the hydrolysis of GTP during the formation of the 70S ribosomal complex. The sequence is that of Translation initiation factor IF-2 from Neisseria meningitidis serogroup C (strain 053442).